The sequence spans 418 residues: Alpha-1-antitrypsin (418 aa).

Positions 1–24 (MPSSVSWGILLLAGLCCLVPVSLA) are cleaved as a signal peptide. At Ser-38 the chain carries Phosphoserine. 3 N-linked (GlcNAc...) asparagine glycosylation sites follow: Asn-70, Asn-107, and Asn-271. The tract at residues 373–392 (GAMFLEAIPMSIPPEVKFNK) is RCL. Residue Ser-383 is modified to Phosphoserine.

Belongs to the serpin family. In terms of assembly, interacts with CELA2A. Interacts with ERGIC3 and LMAN1/ERGIC53. Interacts with PRSS1/Trypsin. In terms of tissue distribution, plasma.

It localises to the secreted. In terms of biological role, inhibitor of serine proteases. Its primary target is elastase, but it also has a moderate affinity for plasmin and thrombin. Inhibits trypsin, chymotrypsin and plasminogen activator. This chain is Alpha-1-antitrypsin (SERPINA1), found in Pongo abelii (Sumatran orangutan).